The chain runs to 294 residues: Glycine--tRNA ligase alpha subunit (294 aa).

It belongs to the class-II aminoacyl-tRNA synthetase family. As to quaternary structure, tetramer of two alpha and two beta subunits.

The protein resides in the cytoplasm. The catalysed reaction is tRNA(Gly) + glycine + ATP = glycyl-tRNA(Gly) + AMP + diphosphate. The polypeptide is Glycine--tRNA ligase alpha subunit (Lawsonia intracellularis (strain PHE/MN1-00)).